Reading from the N-terminus, the 200-residue chain is Formate dehydrogenase iron-sulfur subunit (200 aa).

4Fe-4S ferredoxin-type domains are found at residues 7–37, 50–81, and 82–111; these read VKFYCDEARCIDCHGCDVACKEAHHLPVGVN, GKEKSLSIACMHCSDAPCAQVCPVDCFYVRAD, and GIVLHDKEKCIGCGYCLYACPFGAPQFPKS. Positions 16, 19, 22, 26, 59, 62, 67, 71, 91, 94, 97, 101, 123, 126, 155, and 159 each coordinate [4Fe-4S] cluster.

Formate dehydrogenase is a membrane-bound complex, formed of at least three different subunits. Requires [4Fe-4S] cluster as cofactor.

Functionally, this chain is an electron transfer unit containing 18 cysteine residues, 16 of which occur in four clusters. In Wolinella succinogenes (strain ATCC 29543 / DSM 1740 / CCUG 13145 / JCM 31913 / LMG 7466 / NCTC 11488 / FDC 602W) (Vibrio succinogenes), this protein is Formate dehydrogenase iron-sulfur subunit (fdhB1).